Consider the following 808-residue polypeptide: Beta-catenin/armadillo-related protein 1 (808 aa).

An involved in transcriptional activation region spans residues 1-85 (MDLDPNLVIN…SSHLSGMSSM (85 aa)). ARM repeat units lie at residues 118-160 (RAIP…NETK), 165-209 (CVIF…RAIS), and 369-408 (SDVPSKMKEELLLKSLLELVNSRNAVIRLYSAQTMSNLVA). Residues 541-808 (NVQDVIEGVR…DQYPYRQGRF (268 aa)) are involved in transcriptional activation. A disordered region spans residues 702–808 (TYEGAGEQWS…DQYPYRQGRF (107 aa)). Residues 723-736 (YCNSSGRDSSKTYN) show a composition bias toward polar residues. Positions 737–750 (SPMYHSPPSMYPEY) are enriched in low complexity. Positions 786–798 (NIPSNQGPSSHLS) are enriched in polar residues.

It belongs to the beta-catenin family. As to quaternary structure, interacts with apr-1, axl-1, daf-16, lin-23, and pop-1 (via acidic region in N-terminus 1-44). Interacts (via ARM repeats) with pry-1.

Its subcellular location is the cytoplasm. It is found in the nucleus. It localises to the membrane. The protein localises to the cell junction. Its function is as follows. Participates in the Wnt signaling pathway which affects cell fate and may regulate the stem cell divisions of seam cells during larval development. Functions as a transcriptional activator but is dependent on the interaction with pop-1. Involved in maintaining lin-39 Hox expression and regulating glr-1 abundance at the synapses. Required for mab-5 expression during Q neuroblast migration and for oxidative stress-induced daf-16 signaling. Has roles in egg laying, vulva precursor cell fate determination, Q neuroblast migration, posterior ectodermal cell P12 specification, movement, body length, male tail development and dauer induction. Functionally redundant to wrm-1 and hmp-2. This Caenorhabditis briggsae protein is Beta-catenin/armadillo-related protein 1 (bar-1).